Here is a 487-residue protein sequence, read N- to C-terminus: Cytochrome c-552 (487 aa).

Residues M1 to A27 form the signal peptide. Residue H104 participates in heme c binding. Heme contacts are provided by C132, C135, and K136. Heme c-binding residues include C170, C173, H174, C219, C222, and H223. Ca(2+) is bound by residues E225, Y226, K271, and Q273. Y226 provides a ligand contact to substrate. H274 serves as a coordination point for substrate. Heme c is bound by residues H285, C292, C295, H296, H311, C324, C327, H328, and H403.

This sequence belongs to the cytochrome c-552 family. Ca(2+) is required as a cofactor. Requires heme c as cofactor.

It is found in the periplasm. The catalysed reaction is 6 Fe(III)-[cytochrome c] + NH4(+) + 2 H2O = 6 Fe(II)-[cytochrome c] + nitrite + 8 H(+). It functions in the pathway nitrogen metabolism; nitrate reduction (assimilation). Its function is as follows. Catalyzes the reduction of nitrite to ammonia, consuming six electrons in the process. The sequence is that of Cytochrome c-552 from Photobacterium profundum (strain SS9).